A 206-amino-acid polypeptide reads, in one-letter code: Musculin (206 aa).

Residues 1–115 form a disordered region; that stretch reads MSTGSVSDPE…QSQRNAANAR (115 aa). Positions 46–56 are enriched in acidic residues; sequence SAEEEDPDGEE. Residues 71–76 carry the Nuclear localization signal motif; sequence KRKRPR. Residues 78–92 are compositionally biased toward gly residues; the sequence is AGGGGAGGSAGGGGK. Residues 93-102 are compositionally biased toward low complexity; the sequence is KPLPAKGSAA. A bHLH domain is found at 107 to 159; that stretch reads SQRNAANARERARMRVLSKAFSRLKTSLPWVPPDTKLSKLDTLRLASSYIAHL.

In terms of assembly, efficient DNA binding requires dimerization with another bHLH protein. Binds DNA as a homodimer or a heterodimer. Forms a heterodimer with TCF3. Expressed in lymphoid tissues, B-cell lines and activated B-cells.

The protein resides in the nucleus. Functionally, transcription repressor capable of inhibiting the transactivation capability of TCF3/E47. May play a role in regulating antigen-dependent B-cell differentiation. The polypeptide is Musculin (MSC) (Homo sapiens (Human)).